We begin with the raw amino-acid sequence, 276 residues long: Bifunctional protein FolD (276 aa).

NADP(+) contacts are provided by residues 158-160 (NRS), S183, and I224.

It belongs to the tetrahydrofolate dehydrogenase/cyclohydrolase family. As to quaternary structure, homodimer.

It carries out the reaction (6R)-5,10-methylene-5,6,7,8-tetrahydrofolate + NADP(+) = (6R)-5,10-methenyltetrahydrofolate + NADPH. It catalyses the reaction (6R)-5,10-methenyltetrahydrofolate + H2O = (6R)-10-formyltetrahydrofolate + H(+). It participates in one-carbon metabolism; tetrahydrofolate interconversion. Functionally, catalyzes the oxidation of 5,10-methylenetetrahydrofolate to 5,10-methenyltetrahydrofolate and then the hydrolysis of 5,10-methenyltetrahydrofolate to 10-formyltetrahydrofolate. In Picrophilus torridus (strain ATCC 700027 / DSM 9790 / JCM 10055 / NBRC 100828 / KAW 2/3), this protein is Bifunctional protein FolD.